An 86-amino-acid polypeptide reads, in one-letter code: Small ribosomal subunit protein bS16 (86 aa).

It belongs to the bacterial ribosomal protein bS16 family.

The protein is Small ribosomal subunit protein bS16 of Xylella fastidiosa (strain 9a5c).